Here is a 130-residue protein sequence, read N- to C-terminus: Small ribosomal subunit protein uS9 (130 aa).

This sequence belongs to the universal ribosomal protein uS9 family.

The chain is Small ribosomal subunit protein uS9 from Bordetella pertussis (strain Tohama I / ATCC BAA-589 / NCTC 13251).